Consider the following 454-residue polypeptide: Serine--tRNA ligase (454 aa).

Residue 247–249 (TAE) participates in L-serine binding. Residues 278 to 280 (RKE) and V294 contribute to the ATP site. E301 is a binding site for L-serine. Position 365–368 (365–368 (ELAS)) interacts with ATP. T400 contributes to the L-serine binding site.

It belongs to the class-II aminoacyl-tRNA synthetase family. Type-1 seryl-tRNA synthetase subfamily. Homodimer. The tRNA molecule binds across the dimer.

The protein localises to the cytoplasm. It catalyses the reaction tRNA(Ser) + L-serine + ATP = L-seryl-tRNA(Ser) + AMP + diphosphate + H(+). It carries out the reaction tRNA(Sec) + L-serine + ATP = L-seryl-tRNA(Sec) + AMP + diphosphate + H(+). It functions in the pathway aminoacyl-tRNA biosynthesis; selenocysteinyl-tRNA(Sec) biosynthesis; L-seryl-tRNA(Sec) from L-serine and tRNA(Sec): step 1/1. Functionally, catalyzes the attachment of serine to tRNA(Ser). Is also able to aminoacylate tRNA(Sec) with serine, to form the misacylated tRNA L-seryl-tRNA(Sec), which will be further converted into selenocysteinyl-tRNA(Sec). The polypeptide is Serine--tRNA ligase (Pyrobaculum calidifontis (strain DSM 21063 / JCM 11548 / VA1)).